Reading from the N-terminus, the 152-residue chain is Ribosome maturation factor RimP (152 aa).

It belongs to the RimP family.

The protein resides in the cytoplasm. In terms of biological role, required for maturation of 30S ribosomal subunits. This is Ribosome maturation factor RimP from Shigella boydii serotype 4 (strain Sb227).